The primary structure comprises 469 residues: Protein RUFY3 (469 aa).

Residues threonine 5 and threonine 12 each carry the phosphothreonine modification. Phosphoserine is present on residues serine 34 and serine 49. Threonine 51 is subject to Phosphothreonine. Residues 95–227 enclose the RUN domain; sequence DSDYAPLQQF…IDANFCMKGE (133 aa). Coiled coils occupy residues 271-362 and 422-463; these read NRHL…VEKE and KSEL…AANK.

As to quaternary structure, interacts with PAK1. Interacts (via C-terminus) with Ras-related Rab-5 proteins. Interacts (via C-terminus) with Ras-related Rap-2 proteins. Interacts with PIK3CA and PIK3R1. Interacts (via N-terminus) with FSCN1; this interaction induces neuron axon development. Interacts with DBN1. Interacts (via the second coiled coil) with GTP-, but not GDP-bound ARL8A and ARL8B. Interacts with dynactin/DCTN1 and the dynein intermediate chain DYNC1I1/2. Directly interacts with DYNC1LI1. Post-translationally, isoform 1 is partially phosphorylated. Phosphorylated by PAK1. In terms of tissue distribution, expressed in brain (at protein level).

The protein resides in the cytoplasm. Its subcellular location is the endomembrane system. It localises to the cell projection. The protein localises to the invadopodium. It is found in the growth cone. The protein resides in the perikaryon. Its subcellular location is the filopodium. It localises to the lamellipodium. The protein localises to the lysosome. Functionally, ARL8 effector that promotes the coupling of endolysosomes to dynein-dynactin for retrograde transport along microtubules. Acts by binding both GTP-bound ARL8 and dynein-dynactin. In nonneuronal cells, promotes concentration of endolysosomes in the juxtanuclear area. In hippocampal neurons, drives retrograde transport of endolysosomes from the axon to the soma. Plays a role in the generation of neuronal polarity formation and axon growth. Implicated in the formation of a single axon by developing neurons. May inhibit the formation of additional axons by inhibition of PI3K in minor neuronal processes. Plays a role in the formation of F-actin-enriched protrusive structures at the cell periphery. Plays a role in cytoskeletal organization by regulating the subcellular localization of FSCN1 and DBN1 at axonal growth cones. This is Protein RUFY3 from Rattus norvegicus (Rat).